The primary structure comprises 220 residues: Uracil-DNA glycosylase (220 aa).

The Proton acceptor role is filled by Asp-60.

Belongs to the uracil-DNA glycosylase (UDG) superfamily. UNG family.

It localises to the cytoplasm. It catalyses the reaction Hydrolyzes single-stranded DNA or mismatched double-stranded DNA and polynucleotides, releasing free uracil.. Excises uracil residues from the DNA which can arise as a result of misincorporation of dUMP residues by DNA polymerase or due to deamination of cytosine. In Francisella tularensis subsp. tularensis (strain FSC 198), this protein is Uracil-DNA glycosylase.